Consider the following 334-residue polypeptide: Transaldolase (334 aa).

An N-acetylserine modification is found at Ser2. Lys143 acts as the Schiff-base intermediate with substrate in catalysis.

This sequence belongs to the transaldolase family. Type 1 subfamily. In terms of assembly, homodimer.

It catalyses the reaction D-sedoheptulose 7-phosphate + D-glyceraldehyde 3-phosphate = D-erythrose 4-phosphate + beta-D-fructose 6-phosphate. The protein operates within carbohydrate degradation; pentose phosphate pathway; D-glyceraldehyde 3-phosphate and beta-D-fructose 6-phosphate from D-ribose 5-phosphate and D-xylulose 5-phosphate (non-oxidative stage): step 2/3. In terms of biological role, transaldolase is important for the balance of metabolites in the pentose-phosphate pathway. The sequence is that of Transaldolase (TAL1) from Kluyveromyces lactis (strain ATCC 8585 / CBS 2359 / DSM 70799 / NBRC 1267 / NRRL Y-1140 / WM37) (Yeast).